The following is a 1374-amino-acid chain: F-actin-uncapping protein LRRC16A (1374 aa).

Met1 bears the N-acetylmethionine mark. Ser122 carries the phosphoserine modification. LRR repeat units lie at residues 245–269 (SNRL…LAGA), 275–298 (NSGL…SLSI), 304–327 (PKGL…SLCQ), 336–363 (ASTL…FLAQ), 391–418 (LQCL…SFKQ), 423–447 (SLAL…LLLG), 485–510 (IHNI…VWLS), 547–570 (DSPL…IINA), 574–597 (NTSL…MLAK), and 658–682 (LQKI…AYRL). Residues 714–738 (GDAIQEDLKAAERLMRDAKNSKTLL) adopt a coiled-coil conformation. At Thr920 the chain carries Phosphothreonine. Disordered stretches follow at residues 961-982 (PFPS…PSEE) and 1040-1374 (KMDC…FIFV). An LRR 11 repeat occupies 962–985 (FPSVRQEKRSSGLISELPSEEGRR). The tract at residues 962-1084 (FPSVRQEKRS…LIKSRSRSER (123 aa)) is inhibits capping activity of CP. Ser972 is modified (phosphoserine). Basic and acidic residues predominate over residues 1040-1064 (KMDCKRSSSRSSDAHELGEGDEKKK). The interval 1058 to 1092 (EGDEKKKRDSRRSGFLNLIKSRSRSERPPTVLMTE) is necessary for localization at the cell membrane. Residue Ser1096 is modified to Phosphoserine. Basic and acidic residues-rich tracts occupy residues 1108-1132 (TTRK…KTPE) and 1141-1150 (EAGRAERSDS). The segment covering 1191 to 1204 (VISQDPSSPVSCNT) has biased composition (polar residues). At Thr1229 the chain carries Phosphothreonine. The span at 1232 to 1244 (KNAKAEPRVDGGC) shows a compositional bias: basic and acidic residues. Over residues 1245-1263 (RSRSSSSMPTSPKPLLQSP) the composition is skewed to low complexity. Ser1281, Ser1289, Ser1291, Ser1295, Ser1319, Ser1328, and Ser1335 each carry phosphoserine. A compositionally biased stretch (low complexity) spans 1317-1330 (QNSSQSSPRSFSQE). Residues 1343 to 1356 (QEQKQRSSGKDGHQ) are compositionally biased toward basic and acidic residues. Ser1363 bears the Phosphoserine mark.

The protein belongs to the CARMIL family. Homodimer. Interacts (via C-terminus) with heterodimeric capping protein (CP); this interaction uncaps barbed ends capped by CP, enhances barbed-end actin polymerization and promotes lamellipodial formation and cell migration. Interacts with MYO1E. Interacts with TRIO.

Its subcellular location is the cytoplasm. It localises to the cytoskeleton. It is found in the cell membrane. The protein localises to the cell projection. The protein resides in the lamellipodium. Cell membrane-cytoskeleton-associated protein that plays a role in the regulation of actin polymerization at the barbed end of actin filaments. Prevents F-actin heterodimeric capping protein (CP) activity at the leading edges of migrating cells, and hence generates uncapped barbed ends and enhances actin polymerization, however, seems unable to nucleate filaments. Plays a role in lamellipodial protrusion formations and cell migration. The chain is F-actin-uncapping protein LRRC16A from Mus musculus (Mouse).